The primary structure comprises 482 residues: Alpha-ketoglutarate semialdehyde dehydrogenase (482 aa).

A disordered region spans residues 1 to 28; that stretch reads MTDPSKNYVNGEWVTSETGETTEVTNPA. A compositionally biased stretch (low complexity) spans 11–25; that stretch reads GEWVTSETGETTEVT. Cys-284 is an active-site residue.

This sequence belongs to the aldehyde dehydrogenase family. In terms of assembly, homotetramer.

It carries out the reaction 2,5-dioxopentanoate + NADP(+) + H2O = 2-oxoglutarate + NADPH + 2 H(+). The protein operates within carbohydrate metabolism; D-xylose degradation. Functionally, alpha-ketoglutarate semialdehyde dehydrogenase involved in the degradation of D-xylose, a major component of hemicelluloses such as xylan. Catalyzes the fifth reaction in the xylose utilization pathway through dehydratation of alpha-ketoglutarate semialdehyde (2,5-dioxopentanoate) into alpha-ketoglutarate. The protein is Alpha-ketoglutarate semialdehyde dehydrogenase of Haloferax volcanii (strain ATCC 29605 / DSM 3757 / JCM 8879 / NBRC 14742 / NCIMB 2012 / VKM B-1768 / DS2) (Halobacterium volcanii).